The following is a 168-amino-acid chain: NADH dehydrogenase [ubiquinone] 1 alpha subcomplex assembly factor 2 (168 aa).

A compositionally biased stretch (basic and acidic residues) spans 108–118; sequence KEKLLQEESNK. The interval 108–168 is disordered; that stretch reads KEKLLQEESN…MPHGDKGHSQ (61 aa). Serine 133 carries the phosphoserine modification. The span at 144 to 155 shows a compositional bias: polar residues; that stretch reads ESPTSTGKTFQP.

The protein belongs to the complex I NDUFA12 subunit family. As to quaternary structure, interacts with ARMC9.

The protein resides in the mitochondrion. In terms of biological role, acts as a molecular chaperone for mitochondrial complex I assembly. Complex I functions in the transfer of electrons from NADH to the respiratory chain. The immediate electron acceptor for the enzyme is believed to be ubiquinone. Is involved in the initial steps of cilia formation, including removal of CP110 from the mother centrioles, docking of membrane vesicles to the mother centrioles, and establishment of the transition zone. The sequence is that of NADH dehydrogenase [ubiquinone] 1 alpha subcomplex assembly factor 2 (NDUFAF2) from Bos taurus (Bovine).